Reading from the N-terminus, the 485-residue chain is MAPVVILFFLFPTLLVLVVAVLGLRGGDDSWKKRGLKVPPGSMGWPLLGETIAFRRLHPCTSLGEYMEEHVNKYGKIYRSNLFGAPTIVSADAELNRFVLMNDERLFEPCFPKSVADILGHTSMLVLTGEMHRYMKSLSVNFMGIARLRNNFLGDSELYITQNFNRWKENIPFPAKEEACKVTFNLMVKNILSLNPGEPESEHLRKLYMSFMKGVVAIPLNLPGTAYKKAIQSRATILKMIEKLMEERIRNKKAGTDKIGEADLLGFILEQSNLDAEQFGDLLLGLLFGGHETSATAITLVIYFLYDCPKAVDHLREEHLGIVRAKKARGEPPALTWDDYKQMEFSQCVVSETLRLGNIIKFVHRKAKTDVQFKGYDIPKGWSVIPVFAAAHLDPSVYENPQKFDPWRWQTISTGTARIDNYMPFGQGLRNCAGLELAKMEIVVFLHHLTLNFDWEMAEPDHPLAYAFPDFPKGLPIKVRRLALK.

Residues 4–24 (VVILFFLFPTLLVLVVAVLGL) traverse the membrane as a helical segment. A heme-binding site is contributed by Cys432.

Belongs to the cytochrome P450 family. Mainly expressed in leaves and, at low levels, in roots and stems.

It is found in the membrane. The enzyme catalyses cholesterol + 2 reduced [NADPH--hemoprotein reductase] + 2 O2 = (16S,22S)-dihydroxycholesterol + 2 oxidized [NADPH--hemoprotein reductase] + 2 H2O + 2 H(+). The protein operates within steroid metabolism; cholesterol metabolism. Functionally, involved in the biosynthesis of spiroketal steroid and saponin natural products from cholesterol such as diosgenin and analogs (e.g. furostanol and spirostanol), plant defense compounds used as main precursors for the industrial production of steroid hormones. During the 5,6-spiroketalization of cholesterol, catalyzes the hydroxylation of cholesterol to form 16S,22S-dihydroxycholesterol and, possibly, the subsequent conversion of 16S,22S-dihydroxycholesterol into 16-oxo-22-hydroxy-cholesterol and 16-hydroxy-22-oxo-cholesterol. 16-hydroxy-22-oxo-cholesterol submit a spontaneous reaction leading to the production of furostanol-type steroid diastereomers, precursors of diosgenin. This is Cholesterol 16,22-dihydroxylase CYP90G4 from Paris polyphylla (Daiswa polyphylla).